An 89-amino-acid chain; its full sequence is MSLGIMTIKETILKYGKNEKNTGKTDVQIALLTNQINHLQLHFSQHKKDHCSRRGLLKMVSKRRKLLNYLKKKNISCYTKLIESLNLRR.

This sequence belongs to the universal ribosomal protein uS15 family. Part of the 30S ribosomal subunit. Forms a bridge to the 50S subunit in the 70S ribosome, contacting the 23S rRNA.

Its function is as follows. One of the primary rRNA binding proteins, it binds directly to 16S rRNA where it helps nucleate assembly of the platform of the 30S subunit by binding and bridging several RNA helices of the 16S rRNA. Functionally, forms an intersubunit bridge (bridge B4) with the 23S rRNA of the 50S subunit in the ribosome. This Buchnera aphidicola subsp. Schizaphis graminum (strain Sg) protein is Small ribosomal subunit protein uS15.